Consider the following 183-residue polypeptide: MINVEIIKNYSKWREHKQINKALIKKITQKTLSQFDNFSEIKQFELSILLTNNEEILTLNKQFRNIEKATNVLSFPANELNWQDLRFSGNEIASSNKPIILENLGDSDYMHLGDIAFCHDVIYNESYEQQKTFENHFIHLLIHSILHLIGFDHQNDTETKIMENLEIEILAHFGISSPYLLIK.

Residues His143, His147, and His153 each coordinate Zn(2+).

The protein belongs to the endoribonuclease YbeY family. Requires Zn(2+) as cofactor.

Its subcellular location is the cytoplasm. Functionally, single strand-specific metallo-endoribonuclease involved in late-stage 70S ribosome quality control and in maturation of the 3' terminus of the 16S rRNA. This chain is Endoribonuclease YbeY, found in Rickettsia bellii (strain RML369-C).